The chain runs to 109 residues: Phosphoribosyl-ATP pyrophosphatase (109 aa).

Belongs to the PRA-PH family.

It is found in the cytoplasm. The enzyme catalyses 1-(5-phospho-beta-D-ribosyl)-ATP + H2O = 1-(5-phospho-beta-D-ribosyl)-5'-AMP + diphosphate + H(+). It functions in the pathway amino-acid biosynthesis; L-histidine biosynthesis; L-histidine from 5-phospho-alpha-D-ribose 1-diphosphate: step 2/9. The sequence is that of Phosphoribosyl-ATP pyrophosphatase from Parvibaculum lavamentivorans (strain DS-1 / DSM 13023 / NCIMB 13966).